A 71-amino-acid chain; its full sequence is Mitotic-spindle organizing protein 1B (71 aa).

It belongs to the MOZART1 family. As to quaternary structure, homo- and heteromultimer. Part of the gamma-tubulin complex. Interacts with TUBB2/TUBB3, GIP2, GCP3 and TSA1 (via C-terminal domain). Mostly expressed in siliques and flowers, and, to a lower extent, in leaves, roots and seedlings, with highest levels in young tissues and meristematic cells, and the vasculature.

It is found in the cytoplasm. It localises to the cytoskeleton. The protein localises to the microtubule organizing center. The protein resides in the spindle. Its subcellular location is the nucleus. It is found in the phragmoplast. It localises to the nucleus envelope. In terms of biological role, required for gamma-tubulin complex recruitment to the microtubule organizing centers (MTOCs). During mitosis, modulates gamma-tubulin complex localization, spindle stability and chromosomal segregation. Necessary for gametophyte development and embryogenesis. This chain is Mitotic-spindle organizing protein 1B (GIP1), found in Arabidopsis thaliana (Mouse-ear cress).